A 565-amino-acid polypeptide reads, in one-letter code: Oxygen-dependent choline dehydrogenase (565 aa).

7–36 (DYIICGAGSAGNVLATRLTEDPGVTVLLLE) is a binding site for FAD. H474 serves as the catalytic Proton acceptor.

The protein belongs to the GMC oxidoreductase family. FAD serves as cofactor.

It carries out the reaction choline + A = betaine aldehyde + AH2. The enzyme catalyses betaine aldehyde + NAD(+) + H2O = glycine betaine + NADH + 2 H(+). It functions in the pathway amine and polyamine biosynthesis; betaine biosynthesis via choline pathway; betaine aldehyde from choline (cytochrome c reductase route): step 1/1. Functionally, involved in the biosynthesis of the osmoprotectant glycine betaine. Catalyzes the oxidation of choline to betaine aldehyde and betaine aldehyde to glycine betaine at the same rate. The chain is Oxygen-dependent choline dehydrogenase from Burkholderia pseudomallei (strain 1710b).